A 1069-amino-acid polypeptide reads, in one-letter code: Cellulose synthase A catalytic subunit 5 [UDP-forming] (1069 aa).

At M1 the chain carries N-acetylmethionine. Topologically, residues 1–265 (MNTGGRLIAG…KSSKINPYRM (265 aa)) are cytoplasmic. Zn(2+)-binding residues include C39, C42, C58, C61, C66, C69, C81, and C84. The segment at 39–85 (CQICGDEIELSVDGESFVACNECAFPVCRPCYEYERREGNQSCPQCK) adopts an RING-type; degenerate zinc-finger fold. S229 and S230 each carry phosphoserine. Residues 266-286 (LIVLRLVILGLFFHYRILHPV) traverse the membrane as a helical segment. The Extracellular portion of the chain corresponds to 287 to 288 (ND). Residues 289–309 (AYALWLISVICEIWFAVSWVL) traverse the membrane as a helical segment. The Cytoplasmic portion of the chain corresponds to 310-853 (DQFPKWYPIE…INSVVYPWTS (544 aa)). 4 residues coordinate UDP-alpha-D-glucose: S348, K354, E355, and D384. The active site involves D384. Residues 438–464 (VRERRAMKRDYEEFKVKINALVATAQK) are a coiled coil. K525 contacts UDP-alpha-D-glucose. Mn(2+) contacts are provided by K526 and D550. Residue D770 is part of the active site. The helical transmembrane segment at 854–874 (IPLLVYCSLPAICLLTGKFIV) threads the bilayer. Residues 875-879 (PEISN) are Extracellular-facing. A helical transmembrane segment spans residues 880-900 (YASILFMALFGSIAVTGILEM). Topologically, residues 901–915 (QWGKVGIDDWWRNEQ) are cytoplasmic. Residues 916–936 (FWVIGGVSAHLFALFQGLLKV) traverse the membrane as a helical segment. At 937 to 965 (LAGVETNFTVTSKAADDGEFSELYIFKWT) the chain is on the extracellular side. N943 is a glycosylation site (N-linked (GlcNAc...) asparagine). The helical transmembrane segment at 966–986 (SLLIPPTTLLIINVIGVIVGI) threads the bilayer. Residues 987-997 (SDAISNGYDSW) are Cytoplasmic-facing. Residues 998–1018 (GPLFGRLFFAFWVILHLYPFL) traverse the membrane as a helical segment. Residues 1019-1027 (KGLLGKQDR) are Extracellular-facing. Residues 1028 to 1048 (MPTIILVWSILLASILTLLWV) form a helical membrane-spanning segment. Over 1049–1069 (RVNPFVAKGGPILEICGLDCL) the chain is Cytoplasmic.

It belongs to the glycosyltransferase 2 family. Plant cellulose synthase subfamily. Zn(2+) is required as a cofactor. Mn(2+) serves as cofactor. In terms of tissue distribution, expressed in young plants, stems and flowers.

The protein localises to the cell membrane. It carries out the reaction [(1-&gt;4)-beta-D-glucosyl](n) + UDP-alpha-D-glucose = [(1-&gt;4)-beta-D-glucosyl](n+1) + UDP + H(+). The protein operates within glycan metabolism; plant cellulose biosynthesis. Catalytic subunit of cellulose synthase terminal complexes ('rosettes'), required for beta-1,4-glucan microfibril crystallization, a major mechanism of the cell wall formation. In Arabidopsis thaliana (Mouse-ear cress), this protein is Cellulose synthase A catalytic subunit 5 [UDP-forming].